Consider the following 551-residue polypeptide: Preprotein translocase subunit SCY1, chloroplastic (551 aa).

The N-terminal 67 residues, 1-67 (MITVSEVSSY…WNLGLVINSR (67 aa)), are a transit peptide targeting the chloroplast. The next 10 membrane-spanning stretches (helical) occupy residues 142–162 (FLKLLGFLALSRLGIYIPLGG), 192–212 (LGICSLGIVPFINAQIVFQLL), 241–261 (ASVGFAIVQAIGQVFYLRPYV), 268–288 (WVVSSVTLLTLGSVLTTYIGE), 295–315 (LGNGTSLLIFTSIISYLPASF), 328–348 (YTGLGTIVVSFLLLVLGIVYV), 382–402 (SAGVMPIIFSTSSLALPATLA), 415–435 (FALTPGGSFYLPTNILLIAFF), 482–502 (VLGSAFLAVLAAGPAVVEQIT), and 503–523 (HLTAFRGFAGTSVLILVGCAT).

Belongs to the SecY/SEC61-alpha family. In terms of assembly, part of the Sec protein translocation apparatus. Interacts with SECE1, ALB3 and probably with SECA1.

It is found in the plastid. The protein localises to the chloroplast thylakoid membrane. Involved in protein export. Probably interacts with other proteins to allow the translocation of proteins across the chloroplast thylakoid membranes. Required for normal greening during embryogenesis. Central subunit of the protein translocation channel SecYE. Consists of two halves formed by TMs 1-5 and 6-10. These two domains form a lateral gate at the front which open onto the bilayer between TMs 2 and 7, and are clamped together by SecE at the back. The channel is closed by both a pore ring composed of hydrophobic SecY resides and a short helix (helix 2A) on the extracellular side of the membrane which forms a plug. This Arabidopsis thaliana (Mouse-ear cress) protein is Preprotein translocase subunit SCY1, chloroplastic (SCY1).